A 591-amino-acid polypeptide reads, in one-letter code: MGKLLEVNGPLVRARLPQVPNGEQVRIGTLGLVGEVIGREGQEALIQVYEGTESVRPGEEVEALGHPLSVELGPGLLGQVFDGIQRPLGRLLEASGDRISRGIQIQGLEQARVWRFQPNPQLAAGMAVTGGVCLGAVPETPTIEHRILVPPGLSGELLELAPEGEYRLSDVIARLDMGDHRSQALTLSHRWPVRNPRPYQQREHGVSPLMTGQRILDTFFPLLKGGKAAVPGPFGAGKTMVQQQIARWSNADIVIYVGCGERGNELVEVLDSFPELTDPHTGRSLMERTLLVANTSNMPVVAREASLYVGVTLGEYYRDQGYDVVIVADSTSRWAEALREVAGRLGQMPVEEGYPAYLASRLAAFYERAGRVQTLGGSVGSVTLIGAVSPPGGDFSEPVTSHTKEIVRTFWALSKDLADARHYPAVSWRESFSDDIPVAARWWAEHIDKHWQAGRAEAMTLLTQAEELSRIVNLVGPEALSGTQRWILEGATLIKEGLLQQSALDPVDSFCAPEKQFVLLDLMLQIYHQGVELLEQGVPVQELLGLPVLARARRCKSDYKNTQVETLQDFTKEIKEAFGRLGREHAEAGKI.

Glycine 232 to threonine 239 contacts ATP.

This sequence belongs to the ATPase alpha/beta chains family.

It catalyses the reaction ATP + H2O + 4 H(+)(in) = ADP + phosphate + 5 H(+)(out). Produces ATP from ADP in the presence of a proton gradient across the membrane. The V-type alpha chain is a catalytic subunit. This chain is V-type ATP synthase alpha chain, found in Nitrosococcus oceani (strain ATCC 19707 / BCRC 17464 / JCM 30415 / NCIMB 11848 / C-107).